A 336-amino-acid polypeptide reads, in one-letter code: Tyrosine phosphatase-like protein H1 (336 aa).

The Tyrosine-protein phosphatase domain maps to 27 to 295; the sequence is IKKEHHKLMK…EICYRVLCEA (269 aa).

Belongs to the protein-tyrosine phosphatase family.

This chain is Tyrosine phosphatase-like protein H1 (H1), found in Microplitis demolitor (Parasitoid wasp).